The chain runs to 192 residues: Beta-glucosidase (192 aa).

This sequence belongs to the glycosyl hydrolase 3 family.

The catalysed reaction is Hydrolysis of terminal, non-reducing beta-D-glucosyl residues with release of beta-D-glucose.. The protein operates within glycan metabolism; cellulose degradation. This is Beta-glucosidase from Schizophyllum commune (Split gill fungus).